A 565-amino-acid chain; its full sequence is NAD-dependent malic enzyme (565 aa).

Y104 functions as the Proton donor in the catalytic mechanism. R157 lines the NAD(+) pocket. The Proton acceptor role is filled by K175. Residues E246, D247, and D270 each coordinate a divalent metal cation. Positions 270 and 418 each coordinate NAD(+).

This sequence belongs to the malic enzymes family. In terms of assembly, homotetramer. It depends on Mg(2+) as a cofactor. Mn(2+) is required as a cofactor.

It catalyses the reaction (S)-malate + NAD(+) = pyruvate + CO2 + NADH. The catalysed reaction is oxaloacetate + H(+) = pyruvate + CO2. In Sodalis glossinidius (strain morsitans), this protein is NAD-dependent malic enzyme.